Consider the following 349-residue polypeptide: Ribosomal RNA small subunit methyltransferase H (349 aa).

S-adenosyl-L-methionine-binding positions include 34–36, Asp54, Phe81, Asp102, and Gln109; that span reads GGH.

The protein belongs to the methyltransferase superfamily. RsmH family.

The protein resides in the cytoplasm. It carries out the reaction cytidine(1402) in 16S rRNA + S-adenosyl-L-methionine = N(4)-methylcytidine(1402) in 16S rRNA + S-adenosyl-L-homocysteine + H(+). Functionally, specifically methylates the N4 position of cytidine in position 1402 (C1402) of 16S rRNA. The protein is Ribosomal RNA small subunit methyltransferase H of Dehalococcoides mccartyi (strain ATCC BAA-2266 / KCTC 15142 / 195) (Dehalococcoides ethenogenes (strain 195)).